We begin with the raw amino-acid sequence, 128 residues long: Small ribosomal subunit protein uS9c (128 aa).

The protein belongs to the universal ribosomal protein uS9 family.

The protein resides in the plastid. The polypeptide is Small ribosomal subunit protein uS9c (rps9) (Euglena longa (Euglenophycean alga)).